Consider the following 633-residue polypeptide: Probable potassium transport system protein Kup 3 (633 aa).

A run of 11 helical transmembrane segments spans residues 61–81 (LVSL…VLFL), 107–127 (PVLM…DAMI), 143–163 (VAPA…LLLF), 173–193 (VSVF…AAGV), 211–231 (AIGF…AIFL), 255–275 (WFAV…ALVL), 287–307 (LMFP…GTII), 345–365 (IYLP…MLMF), 371–391 (LAPA…ILAF), 402–422 (ALTA…FLGA), and 427–447 (IHHG…MMWT).

This sequence belongs to the HAK/KUP transporter (TC 2.A.72) family.

It localises to the cell inner membrane. The catalysed reaction is K(+)(in) + H(+)(in) = K(+)(out) + H(+)(out). Transport of potassium into the cell. Likely operates as a K(+):H(+) symporter. The chain is Probable potassium transport system protein Kup 3 from Sinorhizobium medicae (strain WSM419) (Ensifer medicae).